We begin with the raw amino-acid sequence, 123 residues long: UPF0102 protein APJL_1381 (123 aa).

The protein belongs to the UPF0102 family.

This chain is UPF0102 protein APJL_1381, found in Actinobacillus pleuropneumoniae serotype 3 (strain JL03).